We begin with the raw amino-acid sequence, 347 residues long: Phenylalanine--tRNA ligase alpha subunit (347 aa).

Glu-265 is a binding site for Mg(2+).

Belongs to the class-II aminoacyl-tRNA synthetase family. Phe-tRNA synthetase alpha subunit type 1 subfamily. As to quaternary structure, tetramer of two alpha and two beta subunits. Requires Mg(2+) as cofactor.

It is found in the cytoplasm. It catalyses the reaction tRNA(Phe) + L-phenylalanine + ATP = L-phenylalanyl-tRNA(Phe) + AMP + diphosphate + H(+). The protein is Phenylalanine--tRNA ligase alpha subunit of Wolbachia sp. subsp. Drosophila simulans (strain wRi).